The chain runs to 187 residues: Calmodulin-like protein 1 (187 aa).

An N-acetylalanine modification is found at Ala2. EF-hand domains follow at residues 8-43 (EQIV…LGQN), 44-79 (PTEA…KLRD), 81-116 (DSEE…IGER), and 117-152 (LTDE…KKRR). Ca(2+)-binding residues include Asp21, Asp23, Asp25, Ser27, Glu32, Asp57, Asp59, Asn61, Asn63, Glu68, Asp94, Asp96, Asn98, Glu105, Asp130, Asp132, Asp134, Gln136, and Glu141. A disordered region spans residues 153–187 (KRIEEKREHDGGSRTKSAGPSAAPASKRGQKCVIL). The segment covering 154 to 165 (RIEEKREHDGGS) has biased composition (basic and acidic residues). A compositionally biased stretch (low complexity) spans 169–178 (SAGPSAAPAS). Position 184 is a cysteine methyl ester (Cys184). A lipid anchor (S-farnesyl cysteine) is attached at Cys184. A propeptide spans 185-187 (VIL) (removed in mature form).

This sequence belongs to the calmodulin family. Expressed in roots, etiolated shoots and flowers.

Its subcellular location is the membrane. Calcium-binding protein that binds and activates CAMK1, a calcium/calmodulin-dependent kinase. This is Calmodulin-like protein 1 (CML1) from Oryza sativa subsp. indica (Rice).